The chain runs to 561 residues: Acylcarnitine hydrolase (561 aa).

An N-terminal signal peptide occupies residues 1-26; that stretch reads MARKQPHSWLNAVLFGLLLILIHVWG. Residues cysteine 97 and cysteine 125 are joined by a disulfide bond. Serine 230 functions as the Acyl-ester intermediate in the catalytic mechanism. Cysteine 282 and cysteine 293 are oxidised to a cystine. Residues glutamate 347 and histidine 459 each act as charge relay system in the active site.

It belongs to the type-B carboxylesterase/lipase family. As to expression, expressed in liver, stomach and kidney.

Its subcellular location is the microsome. It localises to the endoplasmic reticulum. It carries out the reaction all-trans-retinyl hexadecanoate + H2O = all-trans-retinol + hexadecanoate + H(+). The catalysed reaction is an O-acyl-(R)-carnitine + H2O = (R)-carnitine + a fatty acid + H(+). Hydrolase with high activity towards palmitoylcarnitine. Is also active with p-nitrophenylacetate and alpha-naphthylacetate. May also hydrolyze retinyl esters. The sequence is that of Acylcarnitine hydrolase from Rattus norvegicus (Rat).